The chain runs to 373 residues: Leucine aminopeptidase 1 (373 aa).

A signal peptide spans 1–18 (MKLLSVLALSATASSVLG). Residues 19–75 (ASIPVDTRAEKFLIELAPGETRWVTEEEKWALKESGQDFFDITDEEVGFTAAVAQPA) constitute a propeptide that is removed on maturation. Residues His176 and Asp195 each coordinate Zn(2+). Asn196 is a glycosylation site (N-linked (GlcNAc...) asparagine). Glu234 and Asp261 together coordinate Zn(2+). Residue Asn288 is glycosylated (N-linked (GlcNAc...) asparagine). An intrachain disulfide couples Cys310 to Cys314. His343 lines the Zn(2+) pocket. N-linked (GlcNAc...) asparagine glycosylation occurs at Asn348.

It belongs to the peptidase M28 family. M28E subfamily. In terms of assembly, monomer. Requires Zn(2+) as cofactor.

Its subcellular location is the secreted. Its function is as follows. Extracellular aminopeptidase that allows assimilation of proteinaceous substrates. This chain is Leucine aminopeptidase 1 (LAP1), found in Arthroderma gypseum (strain ATCC MYA-4604 / CBS 118893) (Microsporum gypseum).